A 632-amino-acid polypeptide reads, in one-letter code: Polyadenylate-binding protein, cytoplasmic and nuclear (632 aa).

A compositionally biased stretch (polar residues) spans 1 to 11 (MSAADANQLQE). Positions 1–43 (MSAADANQLQESLEKLNLDSAPAAAEEEAVAAESAPAGEEGAD) are disordered. Residues 31–43 (AAESAPAGEEGAD) show a composition bias toward low complexity. 4 RRM domains span residues 52–130 (ASLY…WSQR), 140–217 (GNIF…KHIS), 233–310 (TNIY…RAQK), and 336–413 (VNLF…LAQR). Residues 534-615 (QQRDLAAIIA…ALTAFEEYKN (82 aa)) enclose the PABC domain.

It belongs to the polyadenylate-binding protein type-1 family.

Its subcellular location is the cytoplasm. The protein localises to the nucleus. Binds the poly(A) tail of mRNA. Appears to be an important mediator of the multiple roles of the poly(A) tail in mRNA biogenesis, stability and translation. In the nucleus, involved in both mRNA cleavage and polyadenylation. Is also required for efficient mRNA export to the cytoplasm. Acts in concert with a poly(A)-specific nuclease (PAN) to affect poly(A) tail shortening, which may occur concomitantly with either nucleocytoplasmic mRNA transport or translational initiation. In the cytoplasm, stimulates translation initiation and regulates mRNA decay through translation termination-coupled poly(A) shortening, probably mediated by PAN. The polypeptide is Polyadenylate-binding protein, cytoplasmic and nuclear (PAB1) (Scheffersomyces stipitis (strain ATCC 58785 / CBS 6054 / NBRC 10063 / NRRL Y-11545) (Yeast)).